The chain runs to 311 residues: 4-hydroxy-3-methylbut-2-enyl diphosphate reductase (311 aa).

Residue Cys-12 coordinates [4Fe-4S] cluster. Residues His-41 and His-74 each coordinate (2E)-4-hydroxy-3-methylbut-2-enyl diphosphate. Dimethylallyl diphosphate contacts are provided by His-41 and His-74. Residues His-41 and His-74 each coordinate isopentenyl diphosphate. Cys-96 provides a ligand contact to [4Fe-4S] cluster. His-124 contacts (2E)-4-hydroxy-3-methylbut-2-enyl diphosphate. His-124 serves as a coordination point for dimethylallyl diphosphate. His-124 lines the isopentenyl diphosphate pocket. Glu-126 (proton donor) is an active-site residue. Residue Thr-167 coordinates (2E)-4-hydroxy-3-methylbut-2-enyl diphosphate. A [4Fe-4S] cluster-binding site is contributed by Cys-197. (2E)-4-hydroxy-3-methylbut-2-enyl diphosphate contacts are provided by Ser-225, Ser-226, Asn-227, and Ser-269. Dimethylallyl diphosphate-binding residues include Ser-225, Ser-226, Asn-227, and Ser-269. Isopentenyl diphosphate contacts are provided by Ser-225, Ser-226, Asn-227, and Ser-269.

The protein belongs to the IspH family. [4Fe-4S] cluster is required as a cofactor.

It catalyses the reaction isopentenyl diphosphate + 2 oxidized [2Fe-2S]-[ferredoxin] + H2O = (2E)-4-hydroxy-3-methylbut-2-enyl diphosphate + 2 reduced [2Fe-2S]-[ferredoxin] + 2 H(+). The enzyme catalyses dimethylallyl diphosphate + 2 oxidized [2Fe-2S]-[ferredoxin] + H2O = (2E)-4-hydroxy-3-methylbut-2-enyl diphosphate + 2 reduced [2Fe-2S]-[ferredoxin] + 2 H(+). It functions in the pathway isoprenoid biosynthesis; dimethylallyl diphosphate biosynthesis; dimethylallyl diphosphate from (2E)-4-hydroxy-3-methylbutenyl diphosphate: step 1/1. The protein operates within isoprenoid biosynthesis; isopentenyl diphosphate biosynthesis via DXP pathway; isopentenyl diphosphate from 1-deoxy-D-xylulose 5-phosphate: step 6/6. Functionally, catalyzes the conversion of 1-hydroxy-2-methyl-2-(E)-butenyl 4-diphosphate (HMBPP) into a mixture of isopentenyl diphosphate (IPP) and dimethylallyl diphosphate (DMAPP). Acts in the terminal step of the DOXP/MEP pathway for isoprenoid precursor biosynthesis. The protein is 4-hydroxy-3-methylbut-2-enyl diphosphate reductase of Aeromonas hydrophila subsp. hydrophila (strain ATCC 7966 / DSM 30187 / BCRC 13018 / CCUG 14551 / JCM 1027 / KCTC 2358 / NCIMB 9240 / NCTC 8049).